The primary structure comprises 577 residues: Arginine--tRNA ligase (577 aa).

Residues 132-142 (ANPTGPLHVGH) carry the 'HIGH' region motif.

The protein belongs to the class-I aminoacyl-tRNA synthetase family. As to quaternary structure, monomer.

It localises to the cytoplasm. The enzyme catalyses tRNA(Arg) + L-arginine + ATP = L-arginyl-tRNA(Arg) + AMP + diphosphate. This is Arginine--tRNA ligase from Pelagibacter ubique (strain HTCC1062).